A 283-amino-acid chain; its full sequence is Diaminopimelate epimerase (283 aa).

Substrate-binding residues include Asn-13 and Asn-66. Catalysis depends on Cys-75, which acts as the Proton donor. Residues 76 to 77, Asn-165, Asn-198, and 216 to 217 contribute to the substrate site; these read GN and ER. Cys-225 serves as the catalytic Proton acceptor. 226-227 provides a ligand contact to substrate; the sequence is GT.

The protein belongs to the diaminopimelate epimerase family. As to quaternary structure, homodimer.

The protein localises to the cytoplasm. The catalysed reaction is (2S,6S)-2,6-diaminopimelate = meso-2,6-diaminopimelate. It participates in amino-acid biosynthesis; L-lysine biosynthesis via DAP pathway; DL-2,6-diaminopimelate from LL-2,6-diaminopimelate: step 1/1. Catalyzes the stereoinversion of LL-2,6-diaminopimelate (L,L-DAP) to meso-diaminopimelate (meso-DAP), a precursor of L-lysine and an essential component of the bacterial peptidoglycan. This chain is Diaminopimelate epimerase, found in Acaryochloris marina (strain MBIC 11017).